We begin with the raw amino-acid sequence, 304 residues long: Large ribosomal subunit protein uL2 (304 aa).

Residues 246–282 are disordered; it reads HTRGTAMNPVDHPHGGGEGRTRGKHPESPWGWKTKGY. Residues 256–272 are compositionally biased toward basic and acidic residues; it reads DHPHGGGEGRTRGKHPE.

Belongs to the universal ribosomal protein uL2 family. In terms of assembly, part of the 50S ribosomal subunit. Forms a bridge to the 30S subunit in the 70S ribosome.

Its function is as follows. One of the primary rRNA binding proteins. Required for association of the 30S and 50S subunits to form the 70S ribosome, for tRNA binding and peptide bond formation. It has been suggested to have peptidyltransferase activity; this is somewhat controversial. Makes several contacts with the 16S rRNA in the 70S ribosome. This chain is Large ribosomal subunit protein uL2, found in Aquifex aeolicus (strain VF5).